The following is a 364-amino-acid chain: Fructose-bisphosphate aldolase A (364 aa).

Position 9 is a phosphothreonine (threonine 9). 2 positions are modified to phosphoserine: serine 36 and serine 39. Position 42 is an N6-acetyllysine; alternate (lysine 42). Lysine 42 participates in a covalent cross-link: Glycyl lysine isopeptide (Lys-Gly) (interchain with G-Cter in SUMO1); alternate. Lysine 42 is covalently cross-linked (Glycyl lysine isopeptide (Lys-Gly) (interchain with G-Cter in SUMO2); alternate). A beta-D-fructose 1,6-bisphosphate-binding site is contributed by arginine 43. The residue at position 46 (serine 46) is a Phosphoserine. Position 99 is an N6-(2-hydroxyisobutyryl)lysine (lysine 99). Residue lysine 108 is modified to N6-acetyllysine. Lysine 111 carries the post-translational modification N6-acetyllysine; alternate. Lysine 111 carries the post-translational modification N6-malonyllysine; alternate. Position 132 is a phosphoserine (serine 132). Residue lysine 147 is modified to N6-(2-hydroxyisobutyryl)lysine. Catalysis depends on glutamate 188, which acts as the Proton acceptor. The Schiff-base intermediate with dihydroxyacetone-P role is filled by lysine 230. A Phosphoserine modification is found at serine 272. Beta-D-fructose 1,6-bisphosphate is bound by residues 272–274 (SGG), serine 301, and arginine 304. Position 312 is an N6-malonyllysine (lysine 312). An N6-acetyllysine modification is found at lysine 330. Residue asparagine 361 is modified to Deamidated asparagine; in form beta.

The protein belongs to the class I fructose-bisphosphate aldolase family. As to quaternary structure, homotetramer. Interacts with SNX9 and WAS. Interacts with FBP2; the interaction blocks FBP2 inhibition by physiological concentrations of AMP and reduces inhibition by Ca(2+). In terms of processing, asn-361 in form alpha is deaminated to Asp in form beta.

It localises to the cytoplasm. It is found in the myofibril. The protein localises to the sarcomere. The protein resides in the i band. Its subcellular location is the m line. The catalysed reaction is beta-D-fructose 1,6-bisphosphate = D-glyceraldehyde 3-phosphate + dihydroxyacetone phosphate. The protein operates within carbohydrate degradation; glycolysis; D-glyceraldehyde 3-phosphate and glycerone phosphate from D-glucose: step 4/4. Its function is as follows. Plays a key role in glycolysis and gluconeogenesis. In addition, may also function as scaffolding protein. The protein is Fructose-bisphosphate aldolase A (ALDOA) of Oryctolagus cuniculus (Rabbit).